The chain runs to 483 residues: tRNA sulfurtransferase (483 aa).

The THUMP domain occupies 61–165; sequence PLVADALTLI…NDRLLLITER (105 aa). ATP is bound by residues 183–184, lysine 265, glycine 287, and glutamine 296; that span reads LI. Cysteine 344 and cysteine 457 form a disulfide bridge. Residues 405–483 enclose the Rhodanese domain; the sequence is LGSGDVVLDI…GFQNVKVYRP (79 aa). Cysteine 457 serves as the catalytic Cysteine persulfide intermediate.

It belongs to the ThiI family.

It is found in the cytoplasm. The catalysed reaction is [ThiI sulfur-carrier protein]-S-sulfanyl-L-cysteine + a uridine in tRNA + 2 reduced [2Fe-2S]-[ferredoxin] + ATP + H(+) = [ThiI sulfur-carrier protein]-L-cysteine + a 4-thiouridine in tRNA + 2 oxidized [2Fe-2S]-[ferredoxin] + AMP + diphosphate. It catalyses the reaction [ThiS sulfur-carrier protein]-C-terminal Gly-Gly-AMP + S-sulfanyl-L-cysteinyl-[cysteine desulfurase] + AH2 = [ThiS sulfur-carrier protein]-C-terminal-Gly-aminoethanethioate + L-cysteinyl-[cysteine desulfurase] + A + AMP + 2 H(+). It participates in cofactor biosynthesis; thiamine diphosphate biosynthesis. In terms of biological role, catalyzes the ATP-dependent transfer of a sulfur to tRNA to produce 4-thiouridine in position 8 of tRNAs, which functions as a near-UV photosensor. Also catalyzes the transfer of sulfur to the sulfur carrier protein ThiS, forming ThiS-thiocarboxylate. This is a step in the synthesis of thiazole, in the thiamine biosynthesis pathway. The sulfur is donated as persulfide by IscS. This is tRNA sulfurtransferase from Sodalis glossinidius (strain morsitans).